Reading from the N-terminus, the 553-residue chain is Putative transport protein KPK_0013 (553 aa).

Helical transmembrane passes span 4–24, 28–48, 65–85, 95–115, and 158–178; these read IALT…IGNV, GVGF…HFVD, FGLI…FFAS, LFAI…HKLF, and MSYA…MWLV. RCK C-terminal domains are found at residues 192–276 and 279–361; these read RFEE…VIGQ and ATSL…ELGN. The next 6 helical transmembrane spans lie at 371-391, 403-425, 437-457, 464-484, 493-513, and 532-552; these read MLPV…PLFI, AGGP…LYWF, LGIV…FVAT, LSWI…VGIL, YLTL…LAFA, and PLVM…FWGL.

Belongs to the AAE transporter (TC 2.A.81) family. YidE subfamily.

It is found in the cell membrane. The protein is Putative transport protein KPK_0013 of Klebsiella pneumoniae (strain 342).